A 189-amino-acid polypeptide reads, in one-letter code: UPF0149 protein VSAL_I2539 (189 aa).

The protein belongs to the UPF0149 family.

The sequence is that of UPF0149 protein VSAL_I2539 from Aliivibrio salmonicida (strain LFI1238) (Vibrio salmonicida (strain LFI1238)).